A 314-amino-acid chain; its full sequence is Ketimine reductase mu-crystallin (314 aa).

Arg47 is a 3,3',5-triiodo-L-thyronine binding site. 12 residues coordinate NADPH: Ser91, His92, Arg119, Ala144, Val146, Gln147, Asn168, Arg169, Thr170, Asn173, Thr205, and Met206. Glu257 is a 3,3',5-triiodo-L-thyronine binding site. Ser292 provides a ligand contact to NADPH.

Belongs to the ornithine cyclodeaminase/mu-crystallin family. In terms of assembly, homodimer. Binds the thyroid hormone triiodothyronine (T3); T3 binding inhibits enzymatic activity.

It is found in the cytoplasm. It carries out the reaction L-pipecolate + NAD(+) = Delta(1)-piperideine-2-carboxylate + NADH + H(+). The catalysed reaction is L-pipecolate + NADP(+) = Delta(1)-piperideine-2-carboxylate + NADPH + H(+). It catalyses the reaction L-proline + NADP(+) = 1-pyrroline-2-carboxylate + NADPH + H(+). The enzyme catalyses L-proline + NAD(+) = 1-pyrroline-2-carboxylate + NADH + H(+). It carries out the reaction (3R)-1,4-thiomorpholine-3-carboxylate + NAD(+) = 3,4-dehydrothiomorpholine-3-carboxylate + NADH + 2 H(+). The catalysed reaction is (3R)-1,4-thiomorpholine-3-carboxylate + NADP(+) = 3,4-dehydrothiomorpholine-3-carboxylate + NADPH + 2 H(+). It catalyses the reaction (S)-cystathionine ketimine + NADH + 2 H(+) = (3R,5S)-2,3,5,6,7-pentahydro-1,4-thiazepine-3,5-dicarboxylate + NAD(+). The enzyme catalyses (S)-cystathionine ketimine + NADPH + 2 H(+) = (3R,5S)-2,3,5,6,7-pentahydro-1,4-thiazepine-3,5-dicarboxylate + NADP(+). It carries out the reaction (R)-lanthionine ketimine + NADPH + 2 H(+) = (3R,5R)-1,4-thiomorpholine-3,5-dicarboxylate + NADP(+). The catalysed reaction is Delta(2)-thiazoline-2-carboxylate + NADPH + 2 H(+) = L-thiazolidine-2-carboxylate + NADP(+). Functionally, catalyzes the NAD(P)H-dependent reduction of imine double bonds of a number of cyclic ketimine substrates, including sulfur-containing cyclic ketimines. Under physiological conditions, it efficiently catalyzes delta(1)-piperideine-2-carboxylate (P2C) and delta(1)-pyrroline-2-carboxylate (Pyr2C) reduction, suggesting a central role in lysine and glutamate metabolism. Additional substrates are (S)-cystathionine ketimine (CysK), 3,4-dehydrothiomorpholine-3-carboxylate (AECK), and (R)-lanthionine ketimine (LK) that is reduced at very low rate compared to other substrates. Also catalyzes the NAD(P)H-dependent reduction of delta(2)-thiazoline-2-carboxylate (T2C). In Bos taurus (Bovine), this protein is Ketimine reductase mu-crystallin (CRYM).